The following is a 96-amino-acid chain: Glutamyl-tRNA(Gln) amidotransferase subunit C (96 aa).

Belongs to the GatC family. As to quaternary structure, heterotrimer of A, B and C subunits.

It carries out the reaction L-glutamyl-tRNA(Gln) + L-glutamine + ATP + H2O = L-glutaminyl-tRNA(Gln) + L-glutamate + ADP + phosphate + H(+). The catalysed reaction is L-aspartyl-tRNA(Asn) + L-glutamine + ATP + H2O = L-asparaginyl-tRNA(Asn) + L-glutamate + ADP + phosphate + 2 H(+). Functionally, allows the formation of correctly charged Asn-tRNA(Asn) or Gln-tRNA(Gln) through the transamidation of misacylated Asp-tRNA(Asn) or Glu-tRNA(Gln) in organisms which lack either or both of asparaginyl-tRNA or glutaminyl-tRNA synthetases. The reaction takes place in the presence of glutamine and ATP through an activated phospho-Asp-tRNA(Asn) or phospho-Glu-tRNA(Gln). The sequence is that of Glutamyl-tRNA(Gln) amidotransferase subunit C from Neisseria meningitidis serogroup B (strain ATCC BAA-335 / MC58).